Consider the following 184-residue polypeptide: Ribosome-recycling factor (184 aa).

This sequence belongs to the RRF family.

It localises to the cytoplasm. In terms of biological role, responsible for the release of ribosomes from messenger RNA at the termination of protein biosynthesis. May increase the efficiency of translation by recycling ribosomes from one round of translation to another. This chain is Ribosome-recycling factor, found in Psychrobacter sp. (strain PRwf-1).